Reading from the N-terminus, the 358-residue chain is MNTLFMHCRPGFEGEVCSEIAEHAARLNVSGYAKAKTGSACAEFVCTEEDGAQRLMHGQRFAELIFPRQWARGVFIDLPETDRISVILAHLREFPVCGSLWLEMVDTNDGKELSNFCKKFEVHLRKALLNAGKLVDDPSKPRLLLTFKSGREVFMGLAESNNSAMWPMGIPRLKFPRDAPSRSTLKLEEAWHHFIPRDQWDERLHGDMTGVDLGAAPGGWTWQLVNRGMLVTAIDNGPMAESLMDTGLVQHLMADGFTFVPKQPVDWMVCDIVEKPARNAALLETWIGEGHCREAVVNLKLPMKQRYAEVKRLLERIEEGFKARGIRVEIGCKQLYHDREEVTCHLRRLETAKKTKAR.

Residues Ser183, Ala216–Gly219, Asp235, Asp255, and Asp271 contribute to the S-adenosyl-L-methionine site. The active-site Proton acceptor is the Lys300.

The protein belongs to the class I-like SAM-binding methyltransferase superfamily. RNA methyltransferase RlmE family. RlmM subfamily. In terms of assembly, monomer.

It is found in the cytoplasm. It carries out the reaction cytidine(2498) in 23S rRNA + S-adenosyl-L-methionine = 2'-O-methylcytidine(2498) in 23S rRNA + S-adenosyl-L-homocysteine + H(+). In terms of biological role, catalyzes the 2'-O-methylation at nucleotide C2498 in 23S rRNA. This is Ribosomal RNA large subunit methyltransferase M from Pseudomonas fluorescens (strain SBW25).